A 198-amino-acid chain; its full sequence is Urease accessory protein UreE (198 aa).

The tract at residues 137–198 (ARGAYHSPGG…RGHDHDHKHD (62 aa)) is disordered. Residues 149-198 (HGHDHDHNHDHGHDHAHDHNHGHDHDHEHGYEHEHEHRHDRGHDHDHKHD) are compositionally biased toward basic and acidic residues.

It belongs to the UreE family.

The protein localises to the cytoplasm. Its function is as follows. Involved in urease metallocenter assembly. Binds nickel. Probably functions as a nickel donor during metallocenter assembly. This is Urease accessory protein UreE from Rhizobium johnstonii (strain DSM 114642 / LMG 32736 / 3841) (Rhizobium leguminosarum bv. viciae).